The primary structure comprises 104 residues: uncharacterized protein (104 aa).

This is an uncharacterized protein from Invertebrate iridescent virus 3 (IIV-3).